Here is a 749-residue protein sequence, read N- to C-terminus: Fibronectin type III and SPRY domain-containing protein 2 (749 aa).

Positions 205–317 (LNEALESAKD…TIEEMCHEEK (113 aa)) form a coiled coil. Fibronectin type-III domains follow at residues 375-470 (PVIN…TAPS) and 471-564 (PPII…TIGS). The 199-residue stretch at 546-744 (NMGGPSVRSE…KVHNGISMPK (199 aa)) folds into the B30.2/SPRY domain.

As to quaternary structure, interacts with CMYA5. In cardiac muscles, identified in a complex composed of FSD2, CMYA5 and RYR2.

It is found in the nucleus. It localises to the sarcoplasmic reticulum. The protein resides in the cytoplasm. Its subcellular location is the perinuclear region. The polypeptide is Fibronectin type III and SPRY domain-containing protein 2 (FSD2) (Homo sapiens (Human)).